The chain runs to 1386 residues: DNA-directed RNA polymerase subunit beta'' (1386 aa).

Residues Cys224, Cys294, Cys301, and Cys304 each contribute to the Zn(2+) site.

This sequence belongs to the RNA polymerase beta' chain family. RpoC2 subfamily. In plastids the minimal PEP RNA polymerase catalytic core is composed of four subunits: alpha, beta, beta', and beta''. When a (nuclear-encoded) sigma factor is associated with the core the holoenzyme is formed, which can initiate transcription. Requires Zn(2+) as cofactor.

Its subcellular location is the plastid. It is found in the chloroplast. It carries out the reaction RNA(n) + a ribonucleoside 5'-triphosphate = RNA(n+1) + diphosphate. Its function is as follows. DNA-dependent RNA polymerase catalyzes the transcription of DNA into RNA using the four ribonucleoside triphosphates as substrates. The sequence is that of DNA-directed RNA polymerase subunit beta'' from Acorus calamus (Sweet flag).